The sequence spans 165 residues: Nucleotide-binding protein Suden_0039 (165 aa).

It belongs to the YajQ family.

In terms of biological role, nucleotide-binding protein. In Sulfurimonas denitrificans (strain ATCC 33889 / DSM 1251) (Thiomicrospira denitrificans (strain ATCC 33889 / DSM 1251)), this protein is Nucleotide-binding protein Suden_0039.